The sequence spans 221 residues: MQDNALTIALSKGRIFEETLPLLAAAGIAPTEEPEKSRKLIIGTNHENIRLVIVRATDVPTYVRYGAADFGIAGKDVLIEHGGTGLYRPLDLEIAKCRMMVAVRKGFDYEAASQPGCRLKIATKYPEIAASHFAGKGVHVDIIKLYGSMELAPLVGLSDAIVDLVSTGNTLKANGLEAVEHIVDISSYLVVNKAALKTKYALLEPIIQSFGGAVKAKWAFI.

The protein belongs to the ATP phosphoribosyltransferase family. Short subfamily. Heteromultimer composed of HisG and HisZ subunits.

It is found in the cytoplasm. The catalysed reaction is 1-(5-phospho-beta-D-ribosyl)-ATP + diphosphate = 5-phospho-alpha-D-ribose 1-diphosphate + ATP. It participates in amino-acid biosynthesis; L-histidine biosynthesis; L-histidine from 5-phospho-alpha-D-ribose 1-diphosphate: step 1/9. In terms of biological role, catalyzes the condensation of ATP and 5-phosphoribose 1-diphosphate to form N'-(5'-phosphoribosyl)-ATP (PR-ATP). Has a crucial role in the pathway because the rate of histidine biosynthesis seems to be controlled primarily by regulation of HisG enzymatic activity. This Neisseria gonorrhoeae (strain ATCC 700825 / FA 1090) protein is ATP phosphoribosyltransferase.